Consider the following 325-residue polypeptide: Ferrochelatase (325 aa).

Fe cation is bound by residues histidine 195 and glutamate 276.

Belongs to the ferrochelatase family.

It is found in the cytoplasm. It carries out the reaction heme b + 2 H(+) = protoporphyrin IX + Fe(2+). It participates in porphyrin-containing compound metabolism; protoheme biosynthesis; protoheme from protoporphyrin-IX: step 1/1. Catalyzes the ferrous insertion into protoporphyrin IX. This chain is Ferrochelatase, found in Methylococcus capsulatus (strain ATCC 33009 / NCIMB 11132 / Bath).